We begin with the raw amino-acid sequence, 149 residues long: MVYKTKLGEMEISDESIFTFEKGIPGFEHLRKFALVFPQETFPIGWLLSLEDPEVGLPVVDPKLVRADYDPVVPSEDLEEIEAENQEALLFFCVLTIPPGKPEKTTINLRAPIILNQKKKKGIQTILENEDYQLRHLLSEEMERSKTVV.

Belongs to the FliW family. As to quaternary structure, interacts with translational regulator CsrA and flagellin(s).

The protein localises to the cytoplasm. Its function is as follows. Acts as an anti-CsrA protein, binds CsrA and prevents it from repressing translation of its target genes, one of which is flagellin. Binds to flagellin and participates in the assembly of the flagellum. The chain is Flagellar assembly factor FliW from Thermotoga sp. (strain RQ2).